The primary structure comprises 335 residues: Phosphatidylcholine-sterol acyltransferase (335 aa).

A signal peptide spans 1-18; sequence MKKWFVCLLGLVALTVQA. The active-site Nucleophile is S34. Active-site residues include D306 and H309.

The protein belongs to the 'GDSL' lipolytic enzyme family.

It catalyses the reaction a sterol + a 1,2-diacyl-sn-glycero-3-phosphocholine = a sterol ester + a 1-acyl-sn-glycero-3-phosphocholine. In terms of biological role, fatty acid transfer between phosphatidylcholine and cholesterol. The protein is Phosphatidylcholine-sterol acyltransferase of Aeromonas hydrophila.